A 256-amino-acid chain; its full sequence is Protein FixA (256 aa).

Belongs to the ETF beta-subunit/FixA family. Heterodimer of FixA and FixB.

Its pathway is amine and polyamine metabolism; carnitine metabolism. Its function is as follows. Required for anaerobic carnitine reduction. May bring reductant to CaiA. The protein is Protein FixA of Salmonella paratyphi A (strain ATCC 9150 / SARB42).